We begin with the raw amino-acid sequence, 225 residues long: LexA repressor (225 aa).

Positions 26-46 (YEEMKDSLNLKSKSGIHRLIS) form a DNA-binding region, H-T-H motif. Residues Ser146 and Lys184 each act as for autocatalytic cleavage activity in the active site.

It belongs to the peptidase S24 family. In terms of assembly, homodimer.

It carries out the reaction Hydrolysis of Ala-|-Gly bond in repressor LexA.. Its function is as follows. Represses a number of genes involved in the response to DNA damage (SOS response), including recA and lexA. In the presence of single-stranded DNA, RecA interacts with LexA causing an autocatalytic cleavage which disrupts the DNA-binding part of LexA, leading to derepression of the SOS regulon and eventually DNA repair. The polypeptide is LexA repressor (Pelagibacter ubique (strain HTCC1062)).